The following is a 390-amino-acid chain: MVTFWAETAASAATTSKGEPPSKKRKTNPSPPPSLLSLPDVLILNCLSRIPKSYYPKLSIVSKTFRDLIISIDLNHARFHHKTQEHFFHVCLKLPDRPLPSWYTLWIKPQGFDDKEEEKKKKKKSTLVQVPSSYASQTPLLVVGIDSDVYAFKQCYPPSRVMFVRNKECVIWRNAPDMTVARANPVAYVFDRKIYVMGGCAETESANWGEVFDPKTQTWEPLPVPSPELRFSSMIRKIEMIQGKFYVRSNDSKDSVYDPIREKWNVAAKPQLNDSRCSVGNVWYSCRPNSFLWFDNEIKNWRLIKGLSSLNHSCRSGLIETVCYDGNLLLLWDKPTKPRRRVCEDKYICCALISFNKRKNGQVWGKVEWSNVVLTVPSSYRFLRSTVIRT.

The segment covering 1 to 16 (MVTFWAETAASAATTS) has biased composition (low complexity). Residues 1 to 33 (MVTFWAETAASAATTSKGEPPSKKRKTNPSPPP) are disordered. In terms of domain architecture, F-box spans 32-79 (PPSLLSLPDVLILNCLSRIPKSYYPKLSIVSKTFRDLIISIDLNHARF). 4 Kelch repeats span residues 139 to 192 (PLLV…VFDR), 193 to 243 (KIYV…MIQG), 245 to 286 (FYVR…WYSC), and 288 to 321 (PNSFLWFDNEIKNWRLIKGLSSLNHSCRSGLIET).

This Arabidopsis thaliana (Mouse-ear cress) protein is F-box/kelch-repeat protein At4g39753.